A 525-amino-acid polypeptide reads, in one-letter code: GMP synthase [glutamine-hydrolyzing] (525 aa).

The 200-residue stretch at 8–207 (KILILDFGSQ…ALDICGCAAN (200 aa)) folds into the Glutamine amidotransferase type-1 domain. Residue cysteine 85 is the Nucleophile of the active site. Active-site residues include histidine 181 and glutamate 183. The GMPS ATP-PPase domain occupies 208–400 (WKPSSIIEDA…LGLPYNMLYR (193 aa)). 235-241 (SGGVDSS) contacts ATP.

In terms of assembly, homodimer.

It catalyses the reaction XMP + L-glutamine + ATP + H2O = GMP + L-glutamate + AMP + diphosphate + 2 H(+). The protein operates within purine metabolism; GMP biosynthesis; GMP from XMP (L-Gln route): step 1/1. Functionally, catalyzes the synthesis of GMP from XMP. The protein is GMP synthase [glutamine-hydrolyzing] of Shewanella sp. (strain ANA-3).